Reading from the N-terminus, the 145-residue chain is 3-hydroxyacyl-[acyl-carrier-protein] dehydratase FabZ (145 aa).

Histidine 51 is an active-site residue.

It belongs to the thioester dehydratase family. FabZ subfamily.

The protein localises to the cytoplasm. The catalysed reaction is a (3R)-hydroxyacyl-[ACP] = a (2E)-enoyl-[ACP] + H2O. Its function is as follows. Involved in unsaturated fatty acids biosynthesis. Catalyzes the dehydration of short chain beta-hydroxyacyl-ACPs and long chain saturated and unsaturated beta-hydroxyacyl-ACPs. In Staphylococcus saprophyticus subsp. saprophyticus (strain ATCC 15305 / DSM 20229 / NCIMB 8711 / NCTC 7292 / S-41), this protein is 3-hydroxyacyl-[acyl-carrier-protein] dehydratase FabZ.